Here is a 492-residue protein sequence, read N- to C-terminus: ATP synthase subunit beta, chloroplastic (492 aa).

An ATP-binding site is contributed by 170-177 (GGAGVGKT).

It belongs to the ATPase alpha/beta chains family. As to quaternary structure, F-type ATPases have 2 components, CF(1) - the catalytic core - and CF(0) - the membrane proton channel. CF(1) has five subunits: alpha(3), beta(3), gamma(1), delta(1), epsilon(1). CF(0) has four main subunits: a(1), b(1), b'(1) and c(9-12).

The protein localises to the plastid. It localises to the chloroplast thylakoid membrane. It carries out the reaction ATP + H2O + 4 H(+)(in) = ADP + phosphate + 5 H(+)(out). Functionally, produces ATP from ADP in the presence of a proton gradient across the membrane. The catalytic sites are hosted primarily by the beta subunits. The polypeptide is ATP synthase subunit beta, chloroplastic (Pinus thunbergii (Japanese black pine)).